Consider the following 537-residue polypeptide: ATP synthase subunit beta 1 (537 aa).

ATP is bound at residue G164 to T171. The disordered stretch occupies residues P471–R537. 2 stretches are compositionally biased toward polar residues: residues Q473–P498 and I507–E528.

This sequence belongs to the ATPase alpha/beta chains family. F-type ATPases have 2 components, CF(1) - the catalytic core - and CF(0) - the membrane proton channel. CF(1) has five subunits: alpha(3), beta(3), gamma(1), delta(1), epsilon(1). CF(0) has three main subunits: a(1), b(2) and c(9-12). The alpha and beta chains form an alternating ring which encloses part of the gamma chain. CF(1) is attached to CF(0) by a central stalk formed by the gamma and epsilon chains, while a peripheral stalk is formed by the delta and b chains.

Its subcellular location is the cell inner membrane. The enzyme catalyses ATP + H2O + 4 H(+)(in) = ADP + phosphate + 5 H(+)(out). Functionally, produces ATP from ADP in the presence of a proton gradient across the membrane. The catalytic sites are hosted primarily by the beta subunits. The protein is ATP synthase subunit beta 1 of Pseudoalteromonas atlantica (strain T6c / ATCC BAA-1087).